The chain runs to 300 residues: UDP-N-acetylenolpyruvoylglucosamine reductase (300 aa).

Residues 27-216 (RVGGPADVIF…TERREKTQPI (190 aa)) form the FAD-binding PCMH-type domain. Arg172 is an active-site residue. Ser223 serves as the catalytic Proton donor. Glu293 is an active-site residue.

Belongs to the MurB family. FAD serves as cofactor.

It is found in the cytoplasm. It carries out the reaction UDP-N-acetyl-alpha-D-muramate + NADP(+) = UDP-N-acetyl-3-O-(1-carboxyvinyl)-alpha-D-glucosamine + NADPH + H(+). The protein operates within cell wall biogenesis; peptidoglycan biosynthesis. Functionally, cell wall formation. The protein is UDP-N-acetylenolpyruvoylglucosamine reductase of Phenylobacterium zucineum (strain HLK1).